Consider the following 338-residue polypeptide: Tetraacyldisaccharide 4'-kinase (338 aa).

Position 66-73 (66-73) interacts with ATP; sequence IAGGAGKT.

It belongs to the LpxK family.

The catalysed reaction is a lipid A disaccharide + ATP = a lipid IVA + ADP + H(+). It participates in glycolipid biosynthesis; lipid IV(A) biosynthesis; lipid IV(A) from (3R)-3-hydroxytetradecanoyl-[acyl-carrier-protein] and UDP-N-acetyl-alpha-D-glucosamine: step 6/6. Its function is as follows. Transfers the gamma-phosphate of ATP to the 4'-position of a tetraacyldisaccharide 1-phosphate intermediate (termed DS-1-P) to form tetraacyldisaccharide 1,4'-bis-phosphate (lipid IVA). The polypeptide is Tetraacyldisaccharide 4'-kinase (Delftia acidovorans (strain DSM 14801 / SPH-1)).